The primary structure comprises 256 residues: DNA repair protein RecO (256 aa).

The protein belongs to the RecO family.

Its function is as follows. Involved in DNA repair and RecF pathway recombination. The protein is DNA repair protein RecO of Rhizobium etli (strain ATCC 51251 / DSM 11541 / JCM 21823 / NBRC 15573 / CFN 42).